The sequence spans 658 residues: Probable Xaa-Pro aminopeptidase P (658 aa).

Residues aspartate 449, aspartate 460, glutamate 558, and glutamate 572 each coordinate Mn(2+).

Belongs to the peptidase M24B family. It depends on Mn(2+) as a cofactor.

It carries out the reaction Release of any N-terminal amino acid, including proline, that is linked to proline, even from a dipeptide or tripeptide.. In terms of biological role, catalyzes the removal of a penultimate prolyl residue from the N-termini of peptides. This Aspergillus clavatus (strain ATCC 1007 / CBS 513.65 / DSM 816 / NCTC 3887 / NRRL 1 / QM 1276 / 107) protein is Probable Xaa-Pro aminopeptidase P (ampp).